The sequence spans 546 residues: Amidophosphoribosyltransferase (546 aa).

Low complexity predominate over residues 1–26 (MSAPQQQQQSQQKQQQHVRVVEQQQV). Residues 1–39 (MSAPQQQQQSQQKQQQHVRVVEQQQVEPAEAVTSSMESE) are disordered. A propeptide spanning residues 1–53 (MSAPQQQQQSQQKQQQHVRVVEQQQVEPAEAVTSSMESESISASKELTGLTHE) is cleaved from the precursor. Cysteine 54 (nucleophile) is an active-site residue. The region spanning 54–302 (CGVFGAIACG…PGEIVELSRS (249 aa)) is the Glutamine amidotransferase type-2 domain. Serine 113 is subject to Phosphoserine. Threonine 114 is modified (phosphothreonine). Phosphoserine is present on serine 120. Cysteine 321 lines the [4Fe-4S] cluster pocket. Mg(2+) is bound by residues serine 368, aspartate 430, and aspartate 431. Cysteine 467, cysteine 528, and cysteine 531 together coordinate [4Fe-4S] cluster.

In the C-terminal section; belongs to the purine/pyrimidine phosphoribosyltransferase family. Mg(2+) serves as cofactor. The cofactor is [4Fe-4S] cluster.

It carries out the reaction 5-phospho-beta-D-ribosylamine + L-glutamate + diphosphate = 5-phospho-alpha-D-ribose 1-diphosphate + L-glutamine + H2O. Its pathway is purine metabolism; IMP biosynthesis via de novo pathway; N(1)-(5-phospho-D-ribosyl)glycinamide from 5-phospho-alpha-D-ribose 1-diphosphate: step 1/2. In terms of biological role, involved in the first step (and regulatory point) of the de novo biosynthesis of purine nucleotides, where it catalyzes the transfer of glutamine amide to 5-phospho-alpha-D-ribose 1-diphosphate. The sequence is that of Amidophosphoribosyltransferase (Prat) from Drosophila melanogaster (Fruit fly).